The chain runs to 334 residues: Sensor protein BceS (334 aa).

2 consecutive transmembrane segments (helical) span residues 13 to 33 and 35 to 55; these read ILIIIFLQCFTVFIAYLDSAI and LAPVFYSVFLSSMIFLFFLAV. A Histidine kinase domain is found at 121 to 326; the sequence is AWIHEIKTPL…TFTLTFPKEN (206 aa). At histidine 124 the chain carries Phosphohistidine; by autocatalysis.

It is found in the cell membrane. The catalysed reaction is ATP + protein L-histidine = ADP + protein N-phospho-L-histidine.. Member of the two-component regulatory system BceS/BceR involved in the regulation of bacitracin resistance. Activates BceR in response to extracellular bacitracin. This Halalkalibacterium halodurans (strain ATCC BAA-125 / DSM 18197 / FERM 7344 / JCM 9153 / C-125) (Bacillus halodurans) protein is Sensor protein BceS (bceS).